Reading from the N-terminus, the 1148-residue chain is Envelopment polyprotein (1148 aa).

The signal sequence occupies residues 1–23 (MGKSSPVCLYLILQGLLLFDTVN). The Lumenal portion of the chain corresponds to 24–496 (AKNLNELKME…PGLHGWATVL (473 aa)). Intrachain disulfides connect Cys34–Cys159, Cys68–Cys165, Cys117–Cys136, Cys141–Cys146, Cys183–Cys193, and Cys218–Cys257. N-linked (GlcNAc...) asparagine; by host glycosylation occurs at Asn142. Asn357 carries N-linked (GlcNAc...) asparagine; by host glycosylation. 4 disulfide bridges follow: Cys386–Cys445, Cys390–Cys399, Cys415–Cys434, and Cys462–Cys485. Residue Asn409 is glycosylated (N-linked (GlcNAc...) asparagine; by host). The chain crosses the membrane as a helical span at residues 497–517 (LLLTFCFGWVLIPTITMILLK). At 518–637 (ILIAFAYLCS…LSLFRYRSRF (120 aa)) the chain is on the cytoplasmic side. Residues 526–543 (CSKYNTDSKFRILVEKVK) form a binding to the ribonucleoprotein region. CCHC-type zinc fingers lie at residues 555-575 (CEVC…RKSC) and 580-601 (CPYC…FKVC). Binding to the ribonucleoprotein regions lie at residues 598–615 (FKVC…KKSL) and 621–635 (MQGC…RYRS). In terms of domain architecture, ITAM spans 621 to 644 (MQGCYRTLSLFRYRSRFFVGLVWC). The YxxL signature appears at 625–628 (YRTL). A helical membrane pass occupies residues 638–658 (FVGLVWCMLLVLELIVWAASA). The Lumenal portion of the chain corresponds to 659-1115 (ETQNLNDGWT…WVLGVLNGNW (457 aa)). 8 cysteine pairs are disulfide-bonded: Cys745/Cys780, Cys749/Cys787, Cys761/Cys894, Cys775/Cys905, Cys790/Cys913, Cys816/Cys825, Cys833/Cys842, and Cys873/Cys877. Residues 767-787 (YEYETGWGCNPPDCPGVGTGC) form a fusion loop region. Asn937 is a glycosylation site (N-linked (GlcNAc...) asparagine; by host). Intrachain disulfides connect Cys979–Cys1009, Cys1002–Cys1054, Cys1019–Cys1024, Cys1055–Cys1060, and Cys1094–Cys1098. A helical transmembrane segment spans residues 1116–1136 (MVVAVLIALLILSIFLFALCC). The tract at residues 1131–1148 (LFALCCPRRPSYKKDHKP) is binding to the ribonucleoprotein. The Cytoplasmic segment spans residues 1137 to 1148 (PRRPSYKKDHKP).

It belongs to the hantavirus envelope glycoprotein family. As to quaternary structure, homodimer. Homotetramer; forms heterotetrameric Gn-Gc spikes in the pre-fusion conformation. Interacts (via C-terminus) with the nucleoprotein. Interacts with host TUFM; this interaction contributes to the virus-induced degradation of mitochondria by autophagy, which leads to degradation of host MAVS and inhibition of type I interferon (IFN) responses. Interacts with host MAP1LC3B; this interaction contributes to the virus-induced degradation of mitochondria by autophagy, which leads to degradation of host MAVS and inhibition of type I interferon (IFN) responses. Homodimer. Homotetramer; forms heterotetrameric Gn-Gc spikes in the pre-fusion conformation. Homotrimer; forms homotrimer in the post-fusion conformation at acidic pH. Interacts (via C-terminus) with the nucleoprotein. Post-translationally, envelope polyprotein precursor is quickly cleaved in vivo just after synthesis, presumably by host signal peptidase.

Its subcellular location is the virion membrane. The protein resides in the host cell surface. The protein localises to the host Golgi apparatus membrane. It is found in the host endoplasmic reticulum membrane. It localises to the host mitochondrion. Its function is as follows. Forms homotetramers with glycoprotein C at the surface of the virion. Attaches the virion to host cell receptors including integrin ITGAV/ITGB3. This attachment induces virion internalization predominantly through clathrin-dependent endocytosis. Mediates the assembly and budding of infectious virus particles through its interaction with the nucleocapsid protein and the viral genome. May dysregulate normal immune and endothelial cell responses through an ITAM motif. Translocates to mitochondria, binds to host TUFM and recruits MAP1LC3B. These interactions induce mitochondrial autophagy and therefore destruction of host MAVS leading to inhibition of type I interferon (IFN) responses. Concomitant breakdown of glycoprotein N is apparently prevented by the nucleoprotein that may inhibit Gn-stimulated autophagosome-lysosome fusion. Interacts with the viral genomic RNA. Functionally, forms heterooctamers with glycoprotein N at the surface of the virion. Attaches the virion to host cell receptors including integrin ITGAV/ITGB3. This attachment induces virion internalization predominantly through clathrin-dependent endocytosis. Class II fusion protein that promotes fusion of viral membrane with host endosomal membrane after endocytosis of the virion. In Homo sapiens (Human), this protein is Envelopment polyprotein (GP).